The primary structure comprises 352 residues: MAIVSSSAGRADSQPPAAKSRVVDASPLPEEASPAREDGLRPRRLEDYIGQRELKQVLAIAVKAAMGRGDALDHVLLYGPPGLGKTTMAMVLAEELGVKCRVTSAPALERPRDIVGLLVNLQPREVLFIDEIHRLTRVAEELLYPAMEDRRLDLTVGKGSTARTRALELPPFTLVGATTRAGALSSPLRDRFGLIQRLEFYGLEDLQAIVERAAGLLRLQLTAQACQEIARRCRGTPRIANRLLRRVRDVASVCGGESLIDAALVDEALTLHRVDARGLDASDRRLLDLLLESHGGGPVGLETLAAALGEDPATLEAVVEPFLLQLGFLQRTPRGRVVTGAGRRHLGWPELP.

The interval 1 to 42 is disordered; that stretch reads MAIVSSSAGRADSQPPAAKSRVVDASPLPEEASPAREDGLRP. The tract at residues 13–201 is large ATPase domain (RuvB-L); it reads SQPPAAKSRV…FGLIQRLEFY (189 aa). Positions 33-42 are enriched in basic and acidic residues; sequence SPAREDGLRP. Positions 40, 41, 82, 85, 86, 87, 191, 201, and 238 each coordinate ATP. T86 lines the Mg(2+) pocket. A small ATPAse domain (RuvB-S) region spans residues 202-273; that stretch reads GLEDLQAIVE…LVDEALTLHR (72 aa). A head domain (RuvB-H) region spans residues 276–352; it reads ARGLDASDRR…RRHLGWPELP (77 aa). The DNA site is built by R331 and R336.

It belongs to the RuvB family. In terms of assembly, homohexamer. Forms an RuvA(8)-RuvB(12)-Holliday junction (HJ) complex. HJ DNA is sandwiched between 2 RuvA tetramers; dsDNA enters through RuvA and exits via RuvB. An RuvB hexamer assembles on each DNA strand where it exits the tetramer. Each RuvB hexamer is contacted by two RuvA subunits (via domain III) on 2 adjacent RuvB subunits; this complex drives branch migration. In the full resolvosome a probable DNA-RuvA(4)-RuvB(12)-RuvC(2) complex forms which resolves the HJ.

The protein localises to the cytoplasm. The enzyme catalyses ATP + H2O = ADP + phosphate + H(+). Its function is as follows. The RuvA-RuvB-RuvC complex processes Holliday junction (HJ) DNA during genetic recombination and DNA repair, while the RuvA-RuvB complex plays an important role in the rescue of blocked DNA replication forks via replication fork reversal (RFR). RuvA specifically binds to HJ cruciform DNA, conferring on it an open structure. The RuvB hexamer acts as an ATP-dependent pump, pulling dsDNA into and through the RuvAB complex. RuvB forms 2 homohexamers on either side of HJ DNA bound by 1 or 2 RuvA tetramers; 4 subunits per hexamer contact DNA at a time. Coordinated motions by a converter formed by DNA-disengaged RuvB subunits stimulates ATP hydrolysis and nucleotide exchange. Immobilization of the converter enables RuvB to convert the ATP-contained energy into a lever motion, pulling 2 nucleotides of DNA out of the RuvA tetramer per ATP hydrolyzed, thus driving DNA branch migration. The RuvB motors rotate together with the DNA substrate, which together with the progressing nucleotide cycle form the mechanistic basis for DNA recombination by continuous HJ branch migration. Branch migration allows RuvC to scan DNA until it finds its consensus sequence, where it cleaves and resolves cruciform DNA. The sequence is that of Holliday junction branch migration complex subunit RuvB from Prochlorococcus marinus (strain MIT 9313).